Consider the following 318-residue polypeptide: NAD(P)H-dependent D-xylose reductase (318 aa).

The Proton donor role is filled by Tyr-48. Residue His-110 coordinates substrate. NAD(+) is bound by residues 165–166 (SN), 214–223 (SNFGPLSFLE), and 270–280 (KSTFPNTLAVN).

This sequence belongs to the aldo/keto reductase family.

The enzyme catalyses xylitol + NAD(+) = D-xylose + NADH + H(+). It carries out the reaction xylitol + NADP(+) = D-xylose + NADPH + H(+). It functions in the pathway carbohydrate metabolism; D-xylose degradation. Reduces D-xylose into xylitol. Has a preference for NADPH, but can also utilize NADH as cosubstrate. This Pachysolen tannophilus (Yeast) protein is NAD(P)H-dependent D-xylose reductase (XYL1).